A 466-amino-acid polypeptide reads, in one-letter code: MSSLVLKRFSSTFTAKPIPSKAHHHIPLPSSSFPSGYALTGIHAGVKKQAGVPDLSVILSTSEHPTSAAACFTRNAFKAAPVLVSDEVLKKNGGWAKAVVVNSGCANAVTGKQGMDDAWAMVKATDALLPPSAKFEHQTLVMSTGVIGQNLPISKILSGIRESKETLNSDFSAWERAAQAFMTTDTFPKLRSRVFKINGFEYRMAGMDKGAGMIHPNMGPATTFKPKQLHATLLGCILTDAAVSPKSLQDALTYAVDRSFNSISVDGDMSTNDSIYALANGAAKGPLIDEETDKEAYEVFKKELTDFATDLAQLVVRDGEGATKFVTVTVKGAPSYRDAHNIASRISTSALVKTALYGEDANWGRILAASGSVPLLPSSSTGEPLTIDPTKVSVTFIPSDGTSPLPVLVNGEPEVVDEVRAKEIMTLEDFEIFVNLGMSDDPEGEAKYWTCDFSYEYVRINGDYRS.

A mitochondrion-targeting transit peptide spans 1-9 (MSSLVLKRF). Residues T183, K209, T232, E320, N461, and S466 each contribute to the substrate site. T232 serves as the catalytic Nucleophile.

This sequence belongs to the ArgJ family. As to quaternary structure, heterodimer of an alpha and a beta chain. The alpha and beta chains are autoproteolytically processed from a single precursor protein within the mitochondrion.

The protein localises to the mitochondrion matrix. The enzyme catalyses N(2)-acetyl-L-ornithine + L-glutamate = N-acetyl-L-glutamate + L-ornithine. It catalyses the reaction L-glutamate + acetyl-CoA = N-acetyl-L-glutamate + CoA + H(+). It participates in amino-acid biosynthesis; L-arginine biosynthesis; L-ornithine and N-acetyl-L-glutamate from L-glutamate and N(2)-acetyl-L-ornithine (cyclic): step 1/1. The protein operates within amino-acid biosynthesis; L-arginine biosynthesis; N(2)-acetyl-L-ornithine from L-glutamate: step 1/4. Catalyzes two activities which are involved in the cyclic version of arginine biosynthesis: the synthesis of acetylglutamate from glutamate and acetyl-CoA, and of ornithine by transacetylation between acetylornithine and glutamate. In Laccaria bicolor (strain S238N-H82 / ATCC MYA-4686) (Bicoloured deceiver), this protein is Arginine biosynthesis bifunctional protein ArgJ, mitochondrial.